The sequence spans 350 residues: DNA polymerase IV (350 aa).

Positions I6–G187 constitute a UmuC domain. Positions 10 and 105 each coordinate Mg(2+). E106 is a catalytic residue.

Belongs to the DNA polymerase type-Y family. Monomer. It depends on Mg(2+) as a cofactor.

It is found in the cytoplasm. The catalysed reaction is DNA(n) + a 2'-deoxyribonucleoside 5'-triphosphate = DNA(n+1) + diphosphate. Poorly processive, error-prone DNA polymerase involved in untargeted mutagenesis. Copies undamaged DNA at stalled replication forks, which arise in vivo from mismatched or misaligned primer ends. These misaligned primers can be extended by PolIV. Exhibits no 3'-5' exonuclease (proofreading) activity. May be involved in translesional synthesis, in conjunction with the beta clamp from PolIII. In Protochlamydia amoebophila (strain UWE25), this protein is DNA polymerase IV.